An 804-amino-acid chain; its full sequence is Probable phosphoketolase (804 aa).

This sequence belongs to the XFP family. It depends on thiamine diphosphate as a cofactor.

The protein is Probable phosphoketolase of Mycolicibacterium paratuberculosis (strain ATCC BAA-968 / K-10) (Mycobacterium paratuberculosis).